Here is a 244-residue protein sequence, read N- to C-terminus: tRNA pseudouridine synthase A (244 aa).

D52 serves as the catalytic Nucleophile. Residue Y110 participates in substrate binding.

The protein belongs to the tRNA pseudouridine synthase TruA family. Homodimer.

It catalyses the reaction uridine(38/39/40) in tRNA = pseudouridine(38/39/40) in tRNA. Its function is as follows. Formation of pseudouridine at positions 38, 39 and 40 in the anticodon stem and loop of transfer RNAs. The polypeptide is tRNA pseudouridine synthase A (Caldicellulosiruptor bescii (strain ATCC BAA-1888 / DSM 6725 / KCTC 15123 / Z-1320) (Anaerocellum thermophilum)).